A 152-amino-acid chain; its full sequence is UPF0266 membrane protein KPK_1957 (152 aa).

The next 3 helical transmembrane spans lie at 6-26, 45-65, and 67-87; these read LVII…QFIM, VDGL…ITQH, and TPIT…LFWI.

It belongs to the UPF0266 family.

The protein resides in the cell inner membrane. This Klebsiella pneumoniae (strain 342) protein is UPF0266 membrane protein KPK_1957.